Consider the following 96-residue polypeptide: MNIRPLHDRVIIKREEVETRSAGGIVLTGSAATKSTRAKVLAVGKGRILENGTVQPLDVKVGDIVIFNDGYGVKSEKIDGEEVLIISENDILAIVE.

This sequence belongs to the GroES chaperonin family. As to quaternary structure, heptamer of 7 subunits arranged in a ring. Interacts with the chaperonin GroEL.

The protein resides in the cytoplasm. In terms of biological role, together with the chaperonin GroEL, plays an essential role in assisting protein folding. The GroEL-GroES system forms a nano-cage that allows encapsulation of the non-native substrate proteins and provides a physical environment optimized to promote and accelerate protein folding. GroES binds to the apical surface of the GroEL ring, thereby capping the opening of the GroEL channel. The chain is Co-chaperonin GroES from Haemophilus influenzae (strain ATCC 51907 / DSM 11121 / KW20 / Rd).